Consider the following 240-residue polypeptide: Thiamine-phosphate synthase (240 aa).

Residues 63 to 67 and N94 contribute to the 4-amino-2-methyl-5-(diphosphooxymethyl)pyrimidine site; that span reads QYREK. Mg(2+) contacts are provided by D95 and D114. Residue T133 coordinates 4-amino-2-methyl-5-(diphosphooxymethyl)pyrimidine. 159-161 is a binding site for 2-[(2R,5Z)-2-carboxy-4-methylthiazol-5(2H)-ylidene]ethyl phosphate; that stretch reads TFT. K162 lines the 4-amino-2-methyl-5-(diphosphooxymethyl)pyrimidine pocket. Residues G190 and 210–211 contribute to the 2-[(2R,5Z)-2-carboxy-4-methylthiazol-5(2H)-ylidene]ethyl phosphate site; that span reads IS.

The protein belongs to the thiamine-phosphate synthase family. Mg(2+) is required as a cofactor.

It carries out the reaction 2-[(2R,5Z)-2-carboxy-4-methylthiazol-5(2H)-ylidene]ethyl phosphate + 4-amino-2-methyl-5-(diphosphooxymethyl)pyrimidine + 2 H(+) = thiamine phosphate + CO2 + diphosphate. It catalyses the reaction 2-(2-carboxy-4-methylthiazol-5-yl)ethyl phosphate + 4-amino-2-methyl-5-(diphosphooxymethyl)pyrimidine + 2 H(+) = thiamine phosphate + CO2 + diphosphate. The enzyme catalyses 4-methyl-5-(2-phosphooxyethyl)-thiazole + 4-amino-2-methyl-5-(diphosphooxymethyl)pyrimidine + H(+) = thiamine phosphate + diphosphate. The protein operates within cofactor biosynthesis; thiamine diphosphate biosynthesis; thiamine phosphate from 4-amino-2-methyl-5-diphosphomethylpyrimidine and 4-methyl-5-(2-phosphoethyl)-thiazole: step 1/1. Condenses 4-methyl-5-(beta-hydroxyethyl)thiazole monophosphate (THZ-P) and 2-methyl-4-amino-5-hydroxymethyl pyrimidine pyrophosphate (HMP-PP) to form thiamine monophosphate (TMP). The polypeptide is Thiamine-phosphate synthase (Methanosarcina mazei (strain ATCC BAA-159 / DSM 3647 / Goe1 / Go1 / JCM 11833 / OCM 88) (Methanosarcina frisia)).